A 58-amino-acid chain; its full sequence is Large ribosomal subunit protein uL30 (58 aa).

The protein belongs to the universal ribosomal protein uL30 family. Part of the 50S ribosomal subunit.

The protein is Large ribosomal subunit protein uL30 of Vibrio campbellii (strain ATCC BAA-1116).